The chain runs to 404 residues: Cytochrome b561 and DOMON domain-containing protein At5g35735 (404 aa).

The N-terminal stretch at 1 to 25 (MDRTQSPKTALFAVLATLLVLTVNG) is a signal peptide. Residues 49–164 (LGSFLHWTYN…ITANQLWQVG (116 aa)) form the DOMON domain. The Cytochrome b561 domain maps to 170 to 369 (VPASHQTSGD…LEPLTWFIVL (200 aa)). Positions 172–207 (ASHQTSGDNMRSSGRIDFRTGQASAGGGGSGDRLRK) are disordered. The span at 173–183 (SHQTSGDNMRS) shows a compositional bias: polar residues. Helical transmembrane passes span 210-230 (THGV…AMMA) and 241-261 (WFYL…AGWA). Positions 211, 245, and 278 each coordinate heme b. Residues 280–300 (NLGIALFTFATLQVFALLVRP) form a helical membrane-spanning segment. Residue His314 participates in heme b binding. Helical transmembrane passes span 316-336 (TVGY…FDIL) and 349-369 (ILIF…FIVL). The disordered stretch occupies residues 376–404 (GNTVAAPTSSKYSNGVNGTTTTGPHHQDA). Positions 380–404 (AAPTSSKYSNGVNGTTTTGPHHQDA) are enriched in polar residues.

Requires heme b as cofactor.

It localises to the membrane. In terms of biological role, may act as a catecholamine-responsive trans-membrane electron transporter. The protein is Cytochrome b561 and DOMON domain-containing protein At5g35735 of Arabidopsis thaliana (Mouse-ear cress).